The sequence spans 160 residues: Ribosomal RNA large subunit methyltransferase H (160 aa).

S-adenosyl-L-methionine is bound by residues leucine 77, glycine 109, and 128 to 133 (FSRLTF).

The protein belongs to the RNA methyltransferase RlmH family. As to quaternary structure, homodimer.

The protein resides in the cytoplasm. It catalyses the reaction pseudouridine(1915) in 23S rRNA + S-adenosyl-L-methionine = N(3)-methylpseudouridine(1915) in 23S rRNA + S-adenosyl-L-homocysteine + H(+). Specifically methylates the pseudouridine at position 1915 (m3Psi1915) in 23S rRNA. This Desulfitobacterium hafniense (strain Y51) protein is Ribosomal RNA large subunit methyltransferase H.